Here is a 335-residue protein sequence, read N- to C-terminus: Glycerol-3-phosphate dehydrogenase [NAD(P)+] (335 aa).

NADPH contacts are provided by Trp-15, Arg-36, and Lys-109. 3 residues coordinate sn-glycerol 3-phosphate: Lys-109, Gly-137, and Ser-139. Ala-141 provides a ligand contact to NADPH. Residues Lys-192, Asp-245, Ser-255, Arg-256, and Asn-257 each contribute to the sn-glycerol 3-phosphate site. The active-site Proton acceptor is the Lys-192. Arg-256 lines the NADPH pocket. Residues Leu-279 and Glu-281 each contribute to the NADPH site.

Belongs to the NAD-dependent glycerol-3-phosphate dehydrogenase family.

It is found in the cytoplasm. The catalysed reaction is sn-glycerol 3-phosphate + NAD(+) = dihydroxyacetone phosphate + NADH + H(+). It carries out the reaction sn-glycerol 3-phosphate + NADP(+) = dihydroxyacetone phosphate + NADPH + H(+). The protein operates within membrane lipid metabolism; glycerophospholipid metabolism. In terms of biological role, catalyzes the reduction of the glycolytic intermediate dihydroxyacetone phosphate (DHAP) to sn-glycerol 3-phosphate (G3P), the key precursor for phospholipid synthesis. This is Glycerol-3-phosphate dehydrogenase [NAD(P)+] from Beijerinckia indica subsp. indica (strain ATCC 9039 / DSM 1715 / NCIMB 8712).